The following is a 199-amino-acid chain: Adenylyl-sulfate kinase (199 aa).

34–41 lines the ATP pocket; the sequence is GLSGSGKS. S108 (phosphoserine intermediate) is an active-site residue.

This sequence belongs to the APS kinase family.

It carries out the reaction adenosine 5'-phosphosulfate + ATP = 3'-phosphoadenylyl sulfate + ADP + H(+). It functions in the pathway sulfur metabolism; hydrogen sulfide biosynthesis; sulfite from sulfate: step 2/3. In terms of biological role, catalyzes the synthesis of activated sulfate. The protein is Adenylyl-sulfate kinase of Staphylococcus carnosus (strain TM300).